The primary structure comprises 634 residues: tRNA uridine 5-carboxymethylaminomethyl modification enzyme MnmG (634 aa).

Residue 13–18 (GAGHAG) coordinates FAD. 273 to 287 (GPRYCPSIEDKIIKF) contacts NAD(+).

Belongs to the MnmG family. Homodimer. Heterotetramer of two MnmE and two MnmG subunits. It depends on FAD as a cofactor.

The protein localises to the cytoplasm. NAD-binding protein involved in the addition of a carboxymethylaminomethyl (cmnm) group at the wobble position (U34) of certain tRNAs, forming tRNA-cmnm(5)s(2)U34. The chain is tRNA uridine 5-carboxymethylaminomethyl modification enzyme MnmG from Buchnera aphidicola subsp. Cinara cedri (strain Cc).